The sequence spans 527 residues: Amine oxidase [flavin-containing] A (527 aa).

The residue at position 1 (M1) is an N-acetylmethionine. Over 1 to 497 (MERQEKANNA…RTFWERNLPS (497 aa)) the chain is Cytoplasmic. The residue at position 383 (S383) is a Phosphoserine. C406 bears the S-8alpha-FAD cysteine mark. A helical; Anchor for type IV membrane protein membrane pass occupies residues 498 to 518 (VTGLLKIIGFSTSVTALWLAV). Residues 519 to 527 (YKFRLLTRS) lie on the Mitochondrial intermembrane side of the membrane. An interaction with membrane phospholipid headgroups region spans residues 520–522 (KFR).

It belongs to the flavin monoamine oxidase family. In terms of assembly, monomer, homo- or heterodimer (containing two subunits of similar size). Each subunit contains a covalently bound flavin. Enzymatically active as monomer. FAD is required as a cofactor.

The protein resides in the mitochondrion outer membrane. The enzyme catalyses a secondary aliphatic amine + O2 + H2O = a primary amine + an aldehyde + H2O2. It carries out the reaction a primary methyl amine + O2 + H2O = an aldehyde + H2O2 + NH4(+). It catalyses the reaction (R)-adrenaline + O2 + H2O = (R)-3,4-dihydroxymandelaldehyde + methylamine + H2O2. The catalysed reaction is dopamine + O2 + H2O = 3,4-dihydroxyphenylacetaldehyde + H2O2 + NH4(+). The enzyme catalyses tyramine + O2 + H2O = (4-hydroxyphenyl)acetaldehyde + H2O2 + NH4(+). It carries out the reaction (R)-noradrenaline + O2 + H2O = (R)-3,4-dihydroxymandelaldehyde + H2O2 + NH4(+). It catalyses the reaction serotonin + O2 + H2O = (5-hydroxyindol-3-yl)acetaldehyde + H2O2 + NH4(+). The catalysed reaction is kynuramine + O2 + H2O = 3-(2-aminophenyl)-3-oxopropanal + H2O2 + NH4(+). The enzyme catalyses tryptamine + O2 + H2O = indole-3-acetaldehyde + H2O2 + NH4(+). It carries out the reaction 2-phenylethylamine + O2 + H2O = 2-phenylacetaldehyde + H2O2 + NH4(+). Its function is as follows. Catalyzes the oxidative deamination of primary and some secondary amine such as neurotransmitters, with concomitant reduction of oxygen to hydrogen peroxide and has important functions in the metabolism of neuroactive and vasoactive amines in the central nervous system and peripheral tissues. Preferentially oxidizes serotonin. Also catalyzes the oxidative deamination of kynuramine to 3-(2-aminophenyl)-3-oxopropanal that can spontaneously condense to 4-hydroxyquinoline. The sequence is that of Amine oxidase [flavin-containing] A from Sus scrofa (Pig).